The primary structure comprises 706 residues: Elongation factor G (706 aa).

A tr-type G domain is found at L15–V291. Residues A24 to T31, D91 to H95, and N145 to D148 each bind GTP.

It belongs to the TRAFAC class translation factor GTPase superfamily. Classic translation factor GTPase family. EF-G/EF-2 subfamily.

The protein resides in the cytoplasm. Its function is as follows. Catalyzes the GTP-dependent ribosomal translocation step during translation elongation. During this step, the ribosome changes from the pre-translocational (PRE) to the post-translocational (POST) state as the newly formed A-site-bound peptidyl-tRNA and P-site-bound deacylated tRNA move to the P and E sites, respectively. Catalyzes the coordinated movement of the two tRNA molecules, the mRNA and conformational changes in the ribosome. In Leptospira borgpetersenii serovar Hardjo-bovis (strain JB197), this protein is Elongation factor G.